The sequence spans 354 residues: Peptide chain release factor 1 (354 aa).

At Gln233 the chain carries N5-methylglutamine.

This sequence belongs to the prokaryotic/mitochondrial release factor family. In terms of processing, methylated by PrmC. Methylation increases the termination efficiency of RF1.

The protein localises to the cytoplasm. In terms of biological role, peptide chain release factor 1 directs the termination of translation in response to the peptide chain termination codons UAG and UAA. In Clostridioides difficile (strain 630) (Peptoclostridium difficile), this protein is Peptide chain release factor 1.